A 258-amino-acid polypeptide reads, in one-letter code: UDP-2,3-diacylglucosamine hydrolase (258 aa).

Positions 15, 17, 48, 88, and 123 each coordinate Mn(2+). Residue 88–89 participates in substrate binding; that stretch reads NR. The substrate site is built by aspartate 131, serine 169, asparagine 173, lysine 176, and histidine 204. The Mn(2+) site is built by histidine 204 and histidine 206.

Belongs to the LpxH family. Requires Mn(2+) as cofactor.

It is found in the cell inner membrane. It carries out the reaction UDP-2-N,3-O-bis[(3R)-3-hydroxytetradecanoyl]-alpha-D-glucosamine + H2O = 2-N,3-O-bis[(3R)-3-hydroxytetradecanoyl]-alpha-D-glucosaminyl 1-phosphate + UMP + 2 H(+). Its pathway is glycolipid biosynthesis; lipid IV(A) biosynthesis; lipid IV(A) from (3R)-3-hydroxytetradecanoyl-[acyl-carrier-protein] and UDP-N-acetyl-alpha-D-glucosamine: step 4/6. Hydrolyzes the pyrophosphate bond of UDP-2,3-diacylglucosamine to yield 2,3-diacylglucosamine 1-phosphate (lipid X) and UMP by catalyzing the attack of water at the alpha-P atom. Involved in the biosynthesis of lipid A, a phosphorylated glycolipid that anchors the lipopolysaccharide to the outer membrane of the cell. The protein is UDP-2,3-diacylglucosamine hydrolase of Bordetella pertussis (strain Tohama I / ATCC BAA-589 / NCTC 13251).